The sequence spans 308 residues: Glutaminase (308 aa).

Substrate contacts are provided by S68, N118, E162, N169, Y193, Y244, and V262.

This sequence belongs to the glutaminase family. Homotetramer.

It carries out the reaction L-glutamine + H2O = L-glutamate + NH4(+). The polypeptide is Glutaminase (Hahella chejuensis (strain KCTC 2396)).